Consider the following 352-residue polypeptide: MSQDRRDVVRGLPLYKQGASHGENAVKLSSNENPFEPLPSVVEAVTRTLPRFNRYPLMSAEEVRSTIAGHFGVDVSQVAVGAGSTEVASQLMHALAGAGDEIIFPWRSFEAYPILTKVAGATPIPVPLTVDLRHDLDAMADAITDRTRVIFLCTPNNPTGTVLHTDEVVEFLARVPENVVVVMDEAYCHFNRDDAAVDGLTLLEDHPNVVVLRTFSKAYGLAGLRIGFAISTPEISDDLRRVATPFTVTTLAQQAAIASLAAEDELNERVNRIVAERTRVFDELTRQGWKIVPSQANFLWLATGDDTDRIDEVMVSHGVFARCWSEEGIRLSIGLDAENDRAIEALSQAVKG.

Lysine 217 is subject to N6-(pyridoxal phosphate)lysine.

It belongs to the class-II pyridoxal-phosphate-dependent aminotransferase family. Homodimer. It depends on pyridoxal 5'-phosphate as a cofactor.

The enzyme catalyses an aromatic L-alpha-amino acid + 2-oxoglutarate = an aromatic oxo-acid + L-glutamate. Functionally, aminotransferase that catalyzes the conversion of aromatic amino acids and 2-oxoglutarate into corresponding aromatic oxo acids and L-glutamate. This Cutibacterium acnes (strain DSM 16379 / KPA171202) (Propionibacterium acnes) protein is Aromatic amino acid aminotransferase.